A 258-amino-acid chain; its full sequence is Isoprenyl transferase 2 (258 aa).

Asp-39 is a catalytic residue. Asp-39 contacts Mg(2+). Residues 40 to 43, Trp-44, Arg-52, His-57, and 85 to 87 each bind substrate; these read GNRR and SND. The Proton acceptor role is filled by Asn-88. Substrate-binding positions include Arg-92, Arg-207, and 213-215; that span reads RLS. Residue Glu-226 coordinates Mg(2+).

Belongs to the UPP synthase family. In terms of assembly, homodimer. Mg(2+) serves as cofactor.

In terms of biological role, catalyzes the condensation of isopentenyl diphosphate (IPP) with allylic pyrophosphates generating different type of terpenoids. The protein is Isoprenyl transferase 2 of Tropheryma whipplei (strain Twist) (Whipple's bacillus).